The sequence spans 257 residues: Isoprenyl transferase (257 aa).

The active site involves aspartate 34. Residue aspartate 34 coordinates Mg(2+). Residues 35–38 (GNGR), tryptophan 39, arginine 47, histidine 51, and 79–81 (STE) each bind substrate. The active-site Proton acceptor is the asparagine 82. Residues tryptophan 83, arginine 85, arginine 202, and 208-210 (RLS) each bind substrate. Glutamate 221 lines the Mg(2+) pocket.

It belongs to the UPP synthase family. As to quaternary structure, homodimer. Mg(2+) is required as a cofactor.

Its function is as follows. Catalyzes the condensation of isopentenyl diphosphate (IPP) with allylic pyrophosphates generating different type of terpenoids. In Geobacillus kaustophilus (strain HTA426), this protein is Isoprenyl transferase.